The following is an 826-amino-acid chain: Homeobox-leucine zipper protein HDG5 (826 aa).

Disordered stretches follow at residues 1–34 (MLTMGEGNVMTSNNRFASPPQQPSSSSPGTIQNP) and 69–119 (EMME…HRHT). The segment covering 23–34 (PSSSSPGTIQNP) has biased composition (low complexity). Residues 88–105 (EDPKFGNESDVNELHDDE) show a composition bias toward basic and acidic residues. Over residues 110–119 (AKKKRYHRHT) the composition is skewed to basic residues. Residues 111-170 (KKKRYHRHTNRQIQEMEALFKENPHPDDKQRKRLSAELGLKPRQVKFWFQNRRTQMKAQQ) constitute a DNA-binding region (homeobox). A coiled-coil region spans residues 165–189 (QMKAQQDRNENVMLRAENDNLKSEN). The START domain occupies 314–558 (ADEEKVIAME…LQRQCERIAS (245 aa)).

The protein belongs to the HD-ZIP homeobox family. Class IV subfamily. As to expression, expressed in shoot apical meristem (SAM) with higher levels in L1 cells and the epidermal layer of young leaves. Expressed in the L1 of apical inflorescence meristems, early flower primordia, carpel and stamen filament epidermis, ovule primordia, nucellus and chalaze.

The protein resides in the nucleus. Functionally, probable transcription factor. Involved, together with PDF2, in the regulation of flower organs development by promoting the expression of APETALA 3 (AP3) in the epidermis and internal cell layers of developing flowers. The sequence is that of Homeobox-leucine zipper protein HDG5 from Arabidopsis thaliana (Mouse-ear cress).